We begin with the raw amino-acid sequence, 691 residues long: Guanylate cyclase soluble subunit alpha-1 (691 aa).

The disordered stretch occupies residues 26–65 (PREPLGEATGSGPASTPGQPGVCPGVPDKNPPGRLPRRKT). Residues 482 to 609 (TMLFSDIVGF…NNVTLANKFE (128 aa)) form the Guanylate cyclase domain.

This sequence belongs to the adenylyl cyclase class-4/guanylyl cyclase family. Heterodimer of an alpha and a beta chain.

The protein resides in the cytoplasm. The enzyme catalyses GTP = 3',5'-cyclic GMP + diphosphate. Its activity is regulated as follows. Activated by nitric oxide in the presence of magnesium or manganese ions. This Bos taurus (Bovine) protein is Guanylate cyclase soluble subunit alpha-1 (GUCY1A1).